A 177-amino-acid chain; its full sequence is Interleukin-7 (177 aa).

An N-terminal signal peptide occupies residues 1 to 25; sequence MFHVSFRYIFGLPPLILVLLPVASS. Cystine bridges form between Cys-27–Cys-166, Cys-59–Cys-154, and Cys-72–Cys-117. Asn-95, Asn-116, and Asn-141 each carry an N-linked (GlcNAc...) asparagine glycan.

The protein belongs to the IL-7/IL-9 family. Interacts with IL7R and CSF2RG.

The protein resides in the secreted. In terms of biological role, hematopoietic cytokine that plays an essential role in the development, expansion, and survival of naive and memory T-cells and B-cells thereby regulating the number of mature lymphocytes and maintaining lymphoid homeostasis. Mechanistically, exerts its biological effects through a receptor composed of IL7RA subunit and the cytokine receptor common subunit gamma/CSF2RG. Binding to the receptor leads to activation of various kinases including JAK1 or JAK3 depending on the cell type and subsequently propagation of signals through activation of several downstream signaling pathways including the PI3K/Akt/mTOR or the JAK-STAT5. The polypeptide is Interleukin-7 (IL7) (Homo sapiens (Human)).